A 207-amino-acid chain; its full sequence is Guanylate kinase (207 aa).

Positions 17–197 (GRLVVLAGPS…SCDELVSLLV (181 aa)) constitute a Guanylate kinase-like domain. 24–31 (GPSAVGKS) is an ATP binding site.

Belongs to the guanylate kinase family.

The protein resides in the cytoplasm. It catalyses the reaction GMP + ATP = GDP + ADP. Essential for recycling GMP and indirectly, cGMP. The sequence is that of Guanylate kinase from Rhodococcus jostii (strain RHA1).